The primary structure comprises 245 residues: Biosynthetic peptidoglycan transglycosylase (245 aa).

Residues Leu-29–Pro-49 traverse the membrane as a helical segment.

Belongs to the glycosyltransferase 51 family.

It is found in the cell inner membrane. The catalysed reaction is [GlcNAc-(1-&gt;4)-Mur2Ac(oyl-L-Ala-gamma-D-Glu-L-Lys-D-Ala-D-Ala)](n)-di-trans,octa-cis-undecaprenyl diphosphate + beta-D-GlcNAc-(1-&gt;4)-Mur2Ac(oyl-L-Ala-gamma-D-Glu-L-Lys-D-Ala-D-Ala)-di-trans,octa-cis-undecaprenyl diphosphate = [GlcNAc-(1-&gt;4)-Mur2Ac(oyl-L-Ala-gamma-D-Glu-L-Lys-D-Ala-D-Ala)](n+1)-di-trans,octa-cis-undecaprenyl diphosphate + di-trans,octa-cis-undecaprenyl diphosphate + H(+). It functions in the pathway cell wall biogenesis; peptidoglycan biosynthesis. Peptidoglycan polymerase that catalyzes glycan chain elongation from lipid-linked precursors. The sequence is that of Biosynthetic peptidoglycan transglycosylase from Shewanella amazonensis (strain ATCC BAA-1098 / SB2B).